Consider the following 445-residue polypeptide: Oxysterols receptor LXR-alpha (445 aa).

Disordered stretches follow at residues 1-34 and 62-86; these read MSLW…QGGN and TALL…KKGP. Residues 1 to 94 form a transactivation AF-1; required for ligand-independent transactivation function region; the sequence is MSLWLEAAVP…GPAPKMLGNE (94 aa). The nuclear receptor DNA-binding region spans 93-168; it reads NELCSVCGDK…AGMREECVLS (76 aa). NR C4-type zinc fingers lie at residues 96 to 116 and 132 to 156; these read CSVC…CEGC and CHSG…LRKC. Positions 178 to 200 are disordered; it reads KRQEEEQAQATSVSPRVSSPPQV. A compositionally biased stretch (low complexity) spans 189 to 200; that stretch reads SVSPRVSSPPQV. Phosphoserine is present on Ser191. The transactivation AF-2; required for ligand-dependent transactivation function; mediates interaction with CCAR2 stretch occupies residues 203-445; it reads QLSPEQLGMI…LLSEIWDVHE (243 aa). One can recognise an NR LBD domain in the interval 207 to 445; that stretch reads EQLGMIEKLV…LLSEIWDVHE (239 aa).

The protein belongs to the nuclear hormone receptor family. NR1 subfamily. As to quaternary structure, heterodimer of NR1H3 and RXR (retinoic acid receptor). Interacts with CCAR2 (via N-terminus) in a ligand-independent manner. Interacts with SIRT1 and this interaction is inhibited by CCAR2. In terms of processing, ubiquitinated by UBR5, leading to its degradation: UBR5 specifically recognizes and binds ligand-bound NR1H3 when it is not associated with coactivators (NCOAs). In presence of NCOAs, the UBR5-degron is not accessible, preventing its ubiquitination and degradation. In terms of tissue distribution, in adults it is expressed in spleen, pituitary, lung, liver, and fat. Weaker expression is observed in several other tissues.

The protein localises to the nucleus. The protein resides in the cytoplasm. Its function is as follows. Nuclear receptor that exhibits a ligand-dependent transcriptional activation activity. Interaction with retinoic acid receptor (RXR) shifts RXR from its role as a silent DNA-binding partner to an active ligand-binding subunit in mediating retinoid responses through target genes defined by LXRES. LXRES are DR4-type response elements characterized by direct repeats of two similar hexanuclotide half-sites spaced by four nucleotides. Plays an important role in the regulation of cholesterol homeostasis, regulating cholesterol uptake through MYLIP-dependent ubiquitination of LDLR, VLDLR and LRP8. Interplays functionally with RORA for the regulation of genes involved in liver metabolism. Induces LPCAT3-dependent phospholipid remodeling in endoplasmic reticulum (ER) membranes of hepatocytes, driving SREBF1 processing and lipogenesis. Via LPCAT3, triggers the incorporation of arachidonate into phosphatidylcholines of ER membranes, increasing membrane dynamics and enabling triacylglycerols transfer to nascent very low-density lipoprotein (VLDL) particles. Via LPCAT3 also counteracts lipid-induced ER stress response and inflammation, likely by modulating SRC kinase membrane compartmentalization and limiting the synthesis of lipid inflammatory mediators. This is Oxysterols receptor LXR-alpha (Nr1h3) from Rattus norvegicus (Rat).